The following is a 442-amino-acid chain: NADH-quinone oxidoreductase subunit D (442 aa).

This sequence belongs to the complex I 49 kDa subunit family. As to quaternary structure, NDH-1 is composed of 14 different subunits. Subunits NuoB, C, D, E, F, and G constitute the peripheral sector of the complex.

The protein localises to the cell membrane. It carries out the reaction a quinone + NADH + 5 H(+)(in) = a quinol + NAD(+) + 4 H(+)(out). In terms of biological role, NDH-1 shuttles electrons from NADH, via FMN and iron-sulfur (Fe-S) centers, to quinones in the respiratory chain. The immediate electron acceptor for the enzyme in this species is believed to be a menaquinone. Couples the redox reaction to proton translocation (for every two electrons transferred, four hydrogen ions are translocated across the cytoplasmic membrane), and thus conserves the redox energy in a proton gradient. In Mycolicibacterium smegmatis (strain ATCC 700084 / mc(2)155) (Mycobacterium smegmatis), this protein is NADH-quinone oxidoreductase subunit D.